A 176-amino-acid chain; its full sequence is Probable superoxide oxidase CybB (176 aa).

4 helical membrane-spanning segments follow: residues 7–27 (CLQIGIHWLVLLLVIIAWSSI), 44–64 (IHFSCGIAILVLMMTRILIQL), 85–105 (VGHWVIYLLFIALPIIGIAIL), and 137–157 (HLLLANMSYFVIGLHALAALL). His-13 and His-45 together coordinate heme b. 2 residues coordinate heme b: His-137 and His-151.

It belongs to the cytochrome b561 family. The cofactor is heme b.

The protein localises to the cell inner membrane. It catalyses the reaction a ubiquinol + 2 O2 = 2 superoxide + a ubiquinone + 2 H(+). Its function is as follows. B-type di-heme cytochrome. Catalyzes the oxidation of superoxide to molecular oxygen and transfers the extracted electrons to ubiquinone through the two hemes. This Yersinia pestis protein is Probable superoxide oxidase CybB (cybB).